The primary structure comprises 229 residues: 3-isopropylmalate dehydratase small subunit (229 aa).

Residues 198–229 (LPVKREPEQPIESAREGEYPDWQGPLADRGII) are disordered. Over residues 200–215 (VKREPEQPIESAREGE) the composition is skewed to basic and acidic residues.

The protein belongs to the LeuD family. LeuD type 1 subfamily. In terms of assembly, heterodimer of LeuC and LeuD.

The enzyme catalyses (2R,3S)-3-isopropylmalate = (2S)-2-isopropylmalate. The protein operates within amino-acid biosynthesis; L-leucine biosynthesis; L-leucine from 3-methyl-2-oxobutanoate: step 2/4. In terms of biological role, catalyzes the isomerization between 2-isopropylmalate and 3-isopropylmalate, via the formation of 2-isopropylmaleate. The sequence is that of 3-isopropylmalate dehydratase small subunit from Bifidobacterium adolescentis (strain ATCC 15703 / DSM 20083 / NCTC 11814 / E194a).